The primary structure comprises 539 residues: T-complex protein 1 subunit delta (539 aa).

Residues 1 to 29 form a disordered region; it reads MPENVAPRSGATAGAAGGRGKGAYQDRDK. At R19 the chain carries Omega-N-methylarginine. An N6-acetyllysine modification is found at K21. Phosphoserine is present on S36. An ADP-binding site is contributed by G53. G53 contacts ATP. D104 is a binding site for Mg(2+). The ADP site is built by G105, T106, T107, S108, N172, S173, and K174. Positions 105 and 106 each coordinate ATP. Residue K174 participates in ATP binding. 2 positions are modified to phosphoserine: S184 and S202. N6-acetyllysine is present on residues K288, K302, K319, and K326. Residue G425 coordinates ADP. S444 carries the post-translational modification Phosphoserine. Q510 lines the ADP pocket.

Belongs to the TCP-1 chaperonin family. Component of the chaperonin-containing T-complex (TRiC), a hexadecamer composed of two identical back-to-back stacked rings enclosing a protein folding chamber. Each ring is made up of eight different subunits: TCP1/CCT1, CCT2, CCT3, CCT4, CCT5, CCT6A/CCT6, CCT7, CCT8. Interacts with PACRG. Interacts with DNAAF4. Interacts with DLEC1.

It is found in the cytoplasm. The protein localises to the melanosome. Its subcellular location is the cytoskeleton. It localises to the microtubule organizing center. The protein resides in the centrosome. It is found in the cilium basal body. It catalyses the reaction ATP + H2O = ADP + phosphate + H(+). Component of the chaperonin-containing T-complex (TRiC), a molecular chaperone complex that assists the folding of actin, tubulin and other proteins upon ATP hydrolysis. The TRiC complex mediates the folding of WRAP53/TCAB1, thereby regulating telomere maintenance. As part of the TRiC complex may play a role in the assembly of BBSome, a complex involved in ciliogenesis regulating transports vesicles to the cilia. The protein is T-complex protein 1 subunit delta (CCT4) of Homo sapiens (Human).